The chain runs to 436 residues: Gamma-glutamyl phosphate reductase (436 aa).

This sequence belongs to the gamma-glutamyl phosphate reductase family.

Its subcellular location is the cytoplasm. It catalyses the reaction L-glutamate 5-semialdehyde + phosphate + NADP(+) = L-glutamyl 5-phosphate + NADPH + H(+). It functions in the pathway amino-acid biosynthesis; L-proline biosynthesis; L-glutamate 5-semialdehyde from L-glutamate: step 2/2. Catalyzes the NADPH-dependent reduction of L-glutamate 5-phosphate into L-glutamate 5-semialdehyde and phosphate. The product spontaneously undergoes cyclization to form 1-pyrroline-5-carboxylate. In Prochlorococcus marinus (strain MIT 9515), this protein is Gamma-glutamyl phosphate reductase.